The sequence spans 217 residues: IMPACT family member YvyE (217 aa).

Belongs to the IMPACT family.

In Bacillus subtilis (strain 168), this protein is IMPACT family member YvyE (yvyE).